The primary structure comprises 157 residues: 6,7-dimethyl-8-ribityllumazine synthase (157 aa).

Residues Phe22, 57–59, and 81–83 each bind 5-amino-6-(D-ribitylamino)uracil; these read AYE and TVI. Position 86–87 (86–87) interacts with (2S)-2-hydroxy-3-oxobutyl phosphate; the sequence is GT. Residue His89 is the Proton donor of the active site. Phe114 serves as a coordination point for 5-amino-6-(D-ribitylamino)uracil. Arg128 is a (2S)-2-hydroxy-3-oxobutyl phosphate binding site.

It belongs to the DMRL synthase family. In terms of assembly, forms an icosahedral capsid composed of 60 subunits, arranged as a dodecamer of pentamers.

The enzyme catalyses (2S)-2-hydroxy-3-oxobutyl phosphate + 5-amino-6-(D-ribitylamino)uracil = 6,7-dimethyl-8-(1-D-ribityl)lumazine + phosphate + 2 H2O + H(+). Its pathway is cofactor biosynthesis; riboflavin biosynthesis; riboflavin from 2-hydroxy-3-oxobutyl phosphate and 5-amino-6-(D-ribitylamino)uracil: step 1/2. In terms of biological role, catalyzes the formation of 6,7-dimethyl-8-ribityllumazine by condensation of 5-amino-6-(D-ribitylamino)uracil with 3,4-dihydroxy-2-butanone 4-phosphate. This is the penultimate step in the biosynthesis of riboflavin. The polypeptide is 6,7-dimethyl-8-ribityllumazine synthase (Pasteurella multocida (strain Pm70)).